The chain runs to 784 residues: SWI/SNF complex subunit SWI3C homolog (784 aa).

Polar residues predominate over residues 1-10 (MPRKASSTSD). Residues 1-68 (MPRKASSTSD…PEDADDETLA (68 aa)) are disordered. The segment covering 24 to 39 (ASPSPSNRSSAAAAAA) has biased composition (low complexity). Positions 43-66 (DDSDSAAVNEDDDSAVPEDADDET) are enriched in acidic residues. An SWIRM domain is found at 185-284 (HVVPKHSDWF…YLASGSVHRG (100 aa)). A ZZ-type; degenerate zinc finger spans residues 355-409 (LSESSCSYCLQPLTSLHYQSLKEADIALCSDCFHDARYITGHSSLDFQRIDGDND). Zn(2+) contacts are provided by Cys360, Cys363, Cys383, and Cys386. Residues 413 to 464 (NDGDSWTDQETLLLLEGIEKYNDNWNNIAEHVGTKSKAQCIYHFIRLPVEDG) form the SANT domain. Disordered regions lie at residues 667 to 702 (LASP…SMPQ) and 760 to 784 (GMPN…SSVG). The span at 675-695 (PGGSTSTMSSNPMSMSPRPMG) shows a compositional bias: low complexity.

Interacts with LFR. Interacts with NMCP1.

The protein localises to the nucleus. It is found in the nucleoplasm. Its function is as follows. Component of a multiprotein complex equivalent of the SWI/SNF complex, an ATP-dependent chromatin-remodeling complex, which is required for the positive and negative regulation of gene expression of a large number of genes. It changes chromatin structure by altering DNA-histone contacts within a nucleosome, leading eventually to a change in nucleosome position, thus facilitating or repressing binding of gene-specific transcription factors. May be involved in positive response to drought stress and modulation of root growth through its interaction with NMCP1. This is SWI/SNF complex subunit SWI3C homolog from Oryza sativa subsp. japonica (Rice).